Consider the following 505-residue polypeptide: GDP-Man:Man(3)GlcNAc(2)-PP-Dol alpha-1,2-mannosyltransferase (505 aa).

The Lumenal portion of the chain corresponds to 1–4 (MSTM). The chain crosses the membrane as a helical span at residues 5–25 (LWVVVAAVLLFVLPVVRVPML). The Cytoplasmic segment spans residues 26–130 (DLTRRNIIRW…KWVDGSTWKH (105 aa)). The segment at residues 131 to 151 (LTLVGQAMGSMLLTIEALLRF) is an intramembrane region (helical). Residues 152-374 (VPDIWLDTMG…FGINAMWNEH (223 aa)) are Cytoplasmic-facing. Positions 375-395 (FGIAVVEYAAAGLISLVHASA) form an intramembrane region, helical. Residues 396–505 (GPLLDIIVPW…EHKTSRLGSN (110 aa)) lie on the Cytoplasmic side of the membrane.

It belongs to the glycosyltransferase group 1 family.

It localises to the endoplasmic reticulum membrane. The catalysed reaction is an alpha-D-Man-(1-&gt;3)-[alpha-D-Man-(1-&gt;6)]-beta-D-Man-(1-&gt;4)-beta-D-GlcNAc-(1-&gt;4)-alpha-D-GlcNAc-diphospho-di-trans,poly-cis-dolichol + 2 GDP-alpha-D-mannose = an alpha-D-Man-(1-&gt;2)-alpha-D-Man-(1-&gt;2)-alpha-D-Man-(1-&gt;3)-[alpha-D-Man-(1-&gt;6)]-beta-D-Man-(1-&gt;4)-beta-D-GlcNAc-(1-&gt;4)-alpha-D-GlcNAc-diphospho-di-trans,poly-cis-dolichol + 2 GDP + 2 H(+). Its pathway is protein modification; protein glycosylation. In terms of biological role, GDP-Man:Man(3)GlcNAc(2)-PP-Dol alpha-1,2-mannosyltransferase that operates in the biosynthetic pathway of dolichol-linked oligosaccharides, the glycan precursors employed in protein asparagine (N)-glycosylation. The assembly of dolichol-linked oligosaccharides begins on the cytosolic side of the endoplasmic reticulum membrane and finishes in its lumen. The sequential addition of sugars to dolichol pyrophosphate produces dolichol-linked oligosaccharides containing fourteen sugars, including two GlcNAcs, nine mannoses and three glucoses. Once assembled, the oligosaccharide is transferred from the lipid to nascent proteins by oligosaccharyltransferases. Catalyzes, on the cytoplasmic face of the endoplasmic reticulum, the addition of the fourth and fifth mannose residues to the dolichol-linked oligosaccharide chain, to produce Man(5)GlcNAc(2)-PP-dolichol core oligosaccharide. This is GDP-Man:Man(3)GlcNAc(2)-PP-Dol alpha-1,2-mannosyltransferase (ALG11) from Candida glabrata (strain ATCC 2001 / BCRC 20586 / JCM 3761 / NBRC 0622 / NRRL Y-65 / CBS 138) (Yeast).